A 424-amino-acid chain; its full sequence is Hemagglutinin-esterase (424 aa).

Residues 1–16 (MFLLPRFILVSCIIGS) form the signal peptide. Residues 7–127 (FILVSCIIGS…SNDIWMQNKG (121 aa)) form an esterase domain 1 region. At 17–392 (LGFYNPPTNV…PICVYDPLPV (376 aa)) the chain is on the virion surface side. Ser40 serves as the catalytic Nucleophile. Cys44 and Cys65 are disulfide-bonded. Asn54, Asn89, Asn114, Asn153, Asn236, and Asn301 each carry an N-linked (GlcNAc...) asparagine; by host glycan. 3 disulfides stabilise this stretch: Cys113/Cys162, Cys197/Cys276, and Cys205/Cys249. The segment at 128-266 (LFYTQVYKNM…GNYLAISNEL (139 aa)) is receptor binding. An esterase domain 2 region spans residues 267–379 (LLTVPTKAIC…RCPTAADINN (113 aa)). Cys307 and Cys312 are oxidised to a cystine. N-linked (GlcNAc...) asparagine; by host glycosylation is present at Asn316. Residues Asp326 and His329 each act as charge relay system in the active site. Cys347 and Cys371 are disulfide-bonded. The N-linked (GlcNAc...) asparagine; by host glycan is linked to Asn358. Residues 393–413 (ILLGILLGVAVIIIVVLLLYF) form a helical membrane-spanning segment. Residues 414-424 (MVDNGTRLHDA) lie on the Intravirion side of the membrane. Asn417 carries N-linked (GlcNAc...) asparagine; by host glycosylation.

The protein belongs to the influenza type C/coronaviruses hemagglutinin-esterase family. As to quaternary structure, homodimer; disulfide-linked. Forms a complex with the M protein in the pre-Golgi. Associates then with S-M complex to form a ternary complex S-M-HE. N-glycosylated in the host RER.

The protein localises to the virion membrane. It is found in the host cell membrane. The enzyme catalyses N-acetyl-9-O-acetylneuraminate + H2O = N-acetylneuraminate + acetate + H(+). It catalyses the reaction N-acetyl-4-O-acetylneuraminate + H2O = N-acetylneuraminate + acetate + H(+). Its function is as follows. Structural protein that makes short spikes at the surface of the virus. Contains receptor binding and receptor-destroying activities. Mediates de-O-acetylation of N-acetyl-4-O-acetylneuraminic acid, which is probably the receptor determinant recognized by the virus on the surface of erythrocytes and susceptible cells. This receptor-destroying activity is important for virus release as it probably helps preventing self-aggregation and ensures the efficient spread of the progeny virus from cell to cell. May serve as a secondary viral attachment protein for initiating infection, the spike protein being the major one. May become a target for both the humoral and the cellular branches of the immune system. This Homo sapiens (Human) protein is Hemagglutinin-esterase.